The primary structure comprises 544 residues: Chromatin assembly factor 1 subunit A (544 aa).

The segment covering 1–22 has biased composition (polar residues); the sequence is MNSESVDSDVAASTSNKGNELC. 3 disordered regions span residues 1–52, 67–117, and 138–160; these read MNSE…EADE, IYNG…REQE, and QEQQ…AQRL. Over residues 23 to 35 the composition is skewed to low complexity; sequence SSSTDITSLSVSS. Residues 36–47 show a composition bias toward polar residues; that stretch reads PNESVIHSSHSA. Residues 56–170 are interaction with DNA and pcn1/PCNA; it reads KLSYEGNRKK…RQEQILNKER (115 aa). Over residues 74–117 the composition is skewed to basic and acidic residues; sequence AGKEKKLQKQRAQEERIRQKEAERLKREKERQQREQEKKLREQE. A coiled-coil region spans residues 76–176; it reads KEKKLQKQRA…NKERQQLKLN (101 aa). The PCNA-interaction protein (PIP box) motif lies at 172-179; sequence QLKLNNFF. An interaction with histones H3/H4 region spans residues 325-396; sequence SNVLLNPWLE…DKDSVNASNT (72 aa). Residues 351–388 are compositionally biased toward acidic residues; that stretch reads DEEDDGEDLESEDEEVDNSDDIVEDGDNAFVDDEDDDK. Residues 351-400 are disordered; sequence DEEDDGEDLESEDEEVDNSDDIVEDGDNAFVDDEDDDKDSVNASNTHRSS.

This sequence belongs to the RLF2 family. As to quaternary structure, component of chromatin assembly factor 1 (CAF-1), composed of pcf1, pcf2 and pcf3. Interacts (via PIP motif) with pcn1/PCNA; the interaction is direct and occurs during S-phase. Interacts with swi6 at the G1/S-phase transition and early S-phase, but not in the G2 phase. The CAF-1 complex interacts with histone H3/H4 dimers.

The protein localises to the nucleus. Acts as a component of the histone chaperone complex chromatin assembly factor 1 (CAF-1), which assembles histone octamers onto DNA during replication and repair. CAF-1 performs the first step of the nucleosome assembly process, bringing newly synthesized histones H3 and H4 to replicating DNA; histones H2A/H2B can bind to this chromatin precursor subsequent to DNA replication to complete the histone octamer. Plays a role in the maintenance of heterochromatin. In Schizosaccharomyces pombe (strain 972 / ATCC 24843) (Fission yeast), this protein is Chromatin assembly factor 1 subunit A.